The following is a 366-amino-acid chain: CRS2-associated factor 2, mitochondrial (366 aa).

A mitochondrion-targeting transit peptide spans 1 to 14 (MLLPRDLLLLPWRR). The interval 24-82 (RRLNHHRAPPFSDPDDDPPFTRLAERPPRAPSKKKKKEEEDQGGRIRPPEPASSDLPFD) is disordered. The segment covering 60–71 (KEEEDQGGRIRP) has biased composition (basic and acidic residues). CRM domains follow at residues 143–241 (EPLA…QRPQ) and 263–359 (DGLT…SVSL).

Part of large ribonucleo-protein complexes that include group IIB introns.

It is found in the mitochondrion. In terms of biological role, may be involved in the splicing of group IIB introns in mitochondria. This Oryza sativa subsp. japonica (Rice) protein is CRS2-associated factor 2, mitochondrial.